We begin with the raw amino-acid sequence, 103 residues long: Large ribosomal subunit protein bL21 (103 aa).

This sequence belongs to the bacterial ribosomal protein bL21 family. Part of the 50S ribosomal subunit. Contacts protein L20.

This protein binds to 23S rRNA in the presence of protein L20. The protein is Large ribosomal subunit protein bL21 of Chloroflexus aurantiacus (strain ATCC 29364 / DSM 637 / Y-400-fl).